The following is a 316-amino-acid chain: PHD finger protein 20-like protein 1 (316 aa).

The region spanning 11-71 is the Tudor 1 domain; sequence ITFEIGARLE…SNRLRPLERP (61 aa). Glycyl lysine isopeptide (Lys-Gly) (interchain with G-Cter in SUMO2) cross-links involve residues Lys-75 and Lys-79. The 57-residue stretch at 85 to 141 folds into the Tudor 2 domain; it reads FDFKAGEEVLARWTDCRYYPAKIEAINKEGTFTVQFYDGVIRCLKRMHIKAMPEDAK. The tract at residues 183–237 is disordered; the sequence is AKNKTGNKPRTSANSNKDKEKDERKWFKVPSKKEETSTSITTPEVEKKEDLPTSS. Residues 186–197 show a composition bias toward polar residues; the sequence is KTGNKPRTSANS. Residues 198-218 show a composition bias toward basic and acidic residues; that stretch reads NKDKEKDERKWFKVPSKKEET.

Interacts with methylated DNMT1 (DNMT1K142me1). Interacts with SOX2.

The protein resides in the nucleus. Is a negative regulator of proteasomal degradation of a set of methylated proteins, including DNMT1 and SOX2. Involved in the maintainance of embryonic stem cells pluripotency, through the regulation of SOX2 levels. This Bos taurus (Bovine) protein is PHD finger protein 20-like protein 1 (PHF20L1).